Reading from the N-terminus, the 66-residue chain is Large ribosomal subunit protein bL31 (66 aa).

Zn(2+) is bound by residues C16, C18, C36, and C39.

The protein belongs to the bacterial ribosomal protein bL31 family. Type A subfamily. In terms of assembly, part of the 50S ribosomal subunit. The cofactor is Zn(2+).

Its function is as follows. Binds the 23S rRNA. This is Large ribosomal subunit protein bL31 from Anoxybacillus flavithermus (strain DSM 21510 / WK1).